A 181-amino-acid polypeptide reads, in one-letter code: Putative NAD(P)H-dependent FMN-containing oxidoreductase YwqN (181 aa).

It belongs to the SsuE family. FMN is required as a cofactor.

Putative NADPH-dependent oxidoreductase. The sequence is that of Putative NAD(P)H-dependent FMN-containing oxidoreductase YwqN (ywqN) from Bacillus subtilis (strain 168).